The chain runs to 447 residues: Argininosuccinate synthase (447 aa).

ATP contacts are provided by residues 17 to 25 (AFSGGLDTS) and alanine 43. Position 99 (tyrosine 99) interacts with L-citrulline. The ATP site is built by glycine 129 and threonine 131. The L-aspartate site is built by threonine 131, asparagine 135, and aspartate 136. Position 135 (asparagine 135) interacts with L-citrulline. Residue aspartate 136 participates in ATP binding. L-citrulline contacts are provided by arginine 139 and serine 192. Aspartate 194 is a binding site for ATP. The L-citrulline site is built by threonine 201, glutamate 203, and glutamate 280.

The protein belongs to the argininosuccinate synthase family. Type 2 subfamily. In terms of assembly, homotetramer.

Its subcellular location is the cytoplasm. The enzyme catalyses L-citrulline + L-aspartate + ATP = 2-(N(omega)-L-arginino)succinate + AMP + diphosphate + H(+). It functions in the pathway amino-acid biosynthesis; L-arginine biosynthesis; L-arginine from L-ornithine and carbamoyl phosphate: step 2/3. The chain is Argininosuccinate synthase from Shigella dysenteriae serotype 1 (strain Sd197).